A 156-amino-acid chain; its full sequence is Endoribonuclease YbeY (156 aa).

Positions 122, 126, and 132 each coordinate Zn(2+).

It belongs to the endoribonuclease YbeY family. Requires Zn(2+) as cofactor.

It localises to the cytoplasm. In terms of biological role, single strand-specific metallo-endoribonuclease involved in late-stage 70S ribosome quality control and in maturation of the 3' terminus of the 16S rRNA. In Geobacillus sp. (strain WCH70), this protein is Endoribonuclease YbeY.